We begin with the raw amino-acid sequence, 955 residues long: 2-oxoglutarate dehydrogenase E1 component (955 aa).

Belongs to the alpha-ketoglutarate dehydrogenase family. Homodimer. Part of the 2-oxoglutarate dehydrogenase (OGDH) complex composed of E1 (2-oxoglutarate dehydrogenase), E2 (dihydrolipoamide succinyltransferase) and E3 (dihydrolipoamide dehydrogenase); the complex contains multiple copies of the three enzymatic components (E1, E2 and E3). Thiamine diphosphate serves as cofactor.

The catalysed reaction is N(6)-[(R)-lipoyl]-L-lysyl-[protein] + 2-oxoglutarate + H(+) = N(6)-[(R)-S(8)-succinyldihydrolipoyl]-L-lysyl-[protein] + CO2. Its function is as follows. E1 component of the 2-oxoglutarate dehydrogenase (OGDH) complex which catalyzes the decarboxylation of 2-oxoglutarate, the first step in the conversion of 2-oxoglutarate to succinyl-CoA and CO(2). The chain is 2-oxoglutarate dehydrogenase E1 component from Bacillus cereus (strain ATCC 10987 / NRS 248).